The chain runs to 92 residues: MRLLILILLSVLVLFQHDFWFGSNGFLDYRQNAEKIKENQAENEKLSQRNQRINAEIQGLTKGFEAIEERARMQHGLVKENEVFYHIVKESK.

Topologically, residues 1–3 (MRL) are cytoplasmic. Residues 4 to 21 (LILILLSVLVLFQHDFWF) traverse the membrane as a helical segment. Residues 22-92 (GSNGFLDYRQ…VFYHIVKESK (71 aa)) lie on the Periplasmic side of the membrane. Residues 28 to 63 (DYRQNAEKIKENQAENEKLSQRNQRINAEIQGLTKG) are a coiled coil.

This sequence belongs to the FtsB family. Part of a complex composed of FtsB, FtsL and FtsQ.

It is found in the cell inner membrane. Its function is as follows. Essential cell division protein. May link together the upstream cell division proteins, which are predominantly cytoplasmic, with the downstream cell division proteins, which are predominantly periplasmic. The sequence is that of Cell division protein FtsB from Haemophilus influenzae (strain PittEE).